We begin with the raw amino-acid sequence, 354 residues long: Uroporphyrinogen decarboxylase (354 aa).

Substrate is bound by residues 27-31, aspartate 77, tyrosine 154, threonine 209, and histidine 327; that span reads RQAGR.

This sequence belongs to the uroporphyrinogen decarboxylase family. Homodimer.

The protein resides in the cytoplasm. It catalyses the reaction uroporphyrinogen III + 4 H(+) = coproporphyrinogen III + 4 CO2. It functions in the pathway porphyrin-containing compound metabolism; protoporphyrin-IX biosynthesis; coproporphyrinogen-III from 5-aminolevulinate: step 4/4. Catalyzes the decarboxylation of four acetate groups of uroporphyrinogen-III to yield coproporphyrinogen-III. This is Uroporphyrinogen decarboxylase from Pseudomonas entomophila (strain L48).